The chain runs to 333 residues: MIIKQLPLTDLHRHLDGNIRIETILDLGQKFGLDLPAYDIEALRPHVQIVEAEPSLVAFLSKLDWGVAVLGDLDACRRVAYENVQDAMNAQIDYAELRFSPYYMAMKHNLPIAGVVEAVVDGVEAGCRDFGIKANLIGIMSRTFGQDACQQELDGLLTQKHKLVAIDLAGDELGQPGDLFVNHFKQVKDADLRVTVHAGEAAGAASMWQAINELGAVRIGHGVKAIEDPKLMEYLAKNNIGIESCLTSNIQTSTVASFESHPIKTFLDYGVKVCLNTDDPAVEGIELPHEYEVAAPKVGLTPEQLKQIQINGLDLAFLSDSEKQALREMAAKR.

Zn(2+)-binding residues include His-12 and His-14. The substrate site is built by His-14, Asp-16, and Gly-170. His-197 provides a ligand contact to Zn(2+). Residue Glu-200 is the Proton donor of the active site. Asp-278 lines the Zn(2+) pocket. Asp-279 provides a ligand contact to substrate.

The protein belongs to the metallo-dependent hydrolases superfamily. Adenosine and AMP deaminases family. Adenosine deaminase subfamily. Zn(2+) is required as a cofactor.

The enzyme catalyses adenosine + H2O + H(+) = inosine + NH4(+). The catalysed reaction is 2'-deoxyadenosine + H2O + H(+) = 2'-deoxyinosine + NH4(+). Functionally, catalyzes the hydrolytic deamination of adenosine and 2-deoxyadenosine. This chain is Adenosine deaminase, found in Aliivibrio fischeri (strain ATCC 700601 / ES114) (Vibrio fischeri).